The chain runs to 106 residues: ATP-dependent Clp protease adapter protein ClpS (106 aa).

The protein belongs to the ClpS family. Binds to the N-terminal domain of the chaperone ClpA.

Involved in the modulation of the specificity of the ClpAP-mediated ATP-dependent protein degradation. The chain is ATP-dependent Clp protease adapter protein ClpS from Aliivibrio fischeri (strain ATCC 700601 / ES114) (Vibrio fischeri).